The sequence spans 522 residues: DNA damage-binding protein CMR1 (522 aa).

The disordered stretch occupies residues Ala-38–Pro-100. Over residues Thr-54–Ala-63 the composition is skewed to polar residues. Position 64 is a phosphoserine (Ser-64). A Phosphothreonine modification is found at Thr-69. Basic and acidic residues predominate over residues Leu-75 to Lys-84. WD repeat units follow at residues Ile-183–Ser-224, Leu-239–Thr-281, Asp-287–Asn-327, Leu-331–Glu-371, Asp-388–Ala-427, Gly-442–Leu-481, and Pro-482–Glu-521. Ser-224 carries the post-translational modification Phosphoserine.

The protein belongs to the WD repeat DDB2/WDR76 family.

It is found in the cytoplasm. It localises to the nucleus. DNA-binding protein that binds to both single- and double-stranded DNA. Binds preferentially to UV-damaged DNA in vitro. May be involved in DNA-metabolic processes. This is DNA damage-binding protein CMR1 from Saccharomyces cerevisiae (strain ATCC 204508 / S288c) (Baker's yeast).